The primary structure comprises 61 residues: Large ribosomal subunit protein uL30 (61 aa).

This sequence belongs to the universal ribosomal protein uL30 family. In terms of assembly, part of the 50S ribosomal subunit.

The sequence is that of Large ribosomal subunit protein uL30 from Chlorobium limicola (strain DSM 245 / NBRC 103803 / 6330).